A 440-amino-acid polypeptide reads, in one-letter code: 5-hydroxytryptamine receptor 6 (440 aa).

Over 1–27 (MVPEPGPTANSTPAWGAGPPSAPGGSG) the chain is Extracellular. Residues 28–52 (WVAAALCVVIALTAAANSLLIALIC) traverse the membrane as a helical segment. Residues 53-62 (TQPALRNTSN) are Cytoplasmic-facing. Residues 63–88 (FFLVSLFTSDLMVGLVVMPPAMLNAL) form a helical membrane-spanning segment. The Extracellular portion of the chain corresponds to 89–96 (YGRWVLAR). A helical transmembrane segment spans residues 97-122 (GLCLLWTAFDVMCCSASILNLCLISL). Cys-99 and Cys-180 form a disulfide bridge. Asp-106 serves as a coordination point for serotonin. Residues 123–142 (DRYLLILSPLRYKLRMTPLR) are Cytoplasmic-facing. The helical transmembrane segment at 143–167 (ALALVLGAWSLAALASFLPLLLGWH) threads the bilayer. Residues 168-185 (ELGHARPPVPGQCRLLAS) lie on the Extracellular side of the membrane. Residues 186-209 (LPFVLVASGLTFFLPSGAICFTYC) traverse the membrane as a helical segment. At 210–266 (RILLAARKQAVQVASLTTGMASQASETLQVPRTPRPGVESADSRRLATKHSRKALKA) the chain is on the cytoplasmic side. Residues 267–293 (SLTLGILLGMFFVTWLPFFVANIVQAV) traverse the membrane as a helical segment. Asn-288 is a binding site for serotonin. At 294–299 (CDCISP) the chain is on the extracellular side. Residues 300 to 323 (GLFDVLTWLGYCNSTMNPIIYPLF) traverse the membrane as a helical segment. At 324-440 (MRDFKRALGR…RPHPLGIPTN (117 aa)) the chain is on the cytoplasmic side. A disordered region spans residues 346-392 (ASLASPSLRTSHSGPRPGLSLQQVLPLPLPPDSDSDSDAGSGGSSGL). Over residues 347-358 (SLASPSLRTSHS) the composition is skewed to polar residues. Positions 362-371 (PGLSLQQVLP) are enriched in low complexity.

The protein belongs to the G-protein coupled receptor 1 family. Interacts with MTOR, RPTOR and NF1. Interacts with CDK5. Expressed in several human brain regions, most prominently in the caudate nucleus.

The protein resides in the cell membrane. Its function is as follows. G-protein coupled receptor for 5-hydroxytryptamine (serotonin), a biogenic hormone that functions as a neurotransmitter, a hormone and a mitogen. Also has a high affinity for tricyclic psychotropic drugs. Ligand binding causes a conformation change that triggers signaling via guanine nucleotide-binding proteins (G proteins) and modulates the activity of downstream effectors. HTR6 is coupled to G(s) G alpha proteins and mediates activation of adenylate cyclase activity. Controls pyramidal neurons migration during corticogenesis, through the regulation of CDK5 activity. Is an activator of mTOR signaling. The chain is 5-hydroxytryptamine receptor 6 from Homo sapiens (Human).